The primary structure comprises 114 residues: Large ribosomal subunit protein uL18 (114 aa).

It belongs to the universal ribosomal protein uL18 family. In terms of assembly, part of the 50S ribosomal subunit; part of the 5S rRNA/L5/L18/L25 subcomplex. Contacts the 23S rRNA. Contacts protein L27 and the 5S rRNA.

In terms of biological role, this is one of the proteins that bind and probably mediate the attachment of the 5S RNA into the large ribosomal subunit, where it forms part of the central protuberance. The sequence is that of Large ribosomal subunit protein uL18 (rplR) from Deinococcus radiodurans (strain ATCC 13939 / DSM 20539 / JCM 16871 / CCUG 27074 / LMG 4051 / NBRC 15346 / NCIMB 9279 / VKM B-1422 / R1).